We begin with the raw amino-acid sequence, 425 residues long: MEPSATPGPQMGVPTGVGDPSLVPPDYEEEFLSYLWRDYLYPKQYEWVLIAAYVAVFLVALVGNTLVCLAVWRNHHMRTVTNYFIVNLSLADVLVTAICLPASLLVDITESWLFGHALCKVIPYLQAVSVSVAVLTLSFIALDRWYAIYHPLLFKSTARRARGSILGIWAVSPAVMVPQAAVMECSSVLPELANRTRLFSVCDERWADDLYPKIYHSCFFIVTYLAPLGLMAMAYFQIFRKLWGRQIPGTTSALVRNWKRPSDQLEDQGQGPGAEPPPRARAFLAEVKQMRARRKTAKMLMVVLLVFALCYLPISVLNVLKRVFGMFRQTSDREAVYACFTFSHWLVYANSAANPIIYNFLSGKFREQFKAAFSCCLPGLGPCGSLKAPSPRSSASHKSLSLQSRCSVSKISEHVVLTSVTTVLP.

Residues methionine 1 to glutamate 46 are Extracellular-facing. The tract at residues aspartate 26–tyrosine 41 is required for response to orexin-A. The helical transmembrane segment at tryptophan 47 to valine 67 threads the bilayer. At cysteine 68 to asparagine 82 the chain is on the cytoplasmic side. The helical transmembrane segment at tyrosine 83–leucine 105 threads the bilayer. The Extracellular portion of the chain corresponds to valine 106–cysteine 119. A disulfide bond links cysteine 119 and cysteine 202. Residues lysine 120–isoleucine 140 traverse the membrane as a helical segment. Residues alanine 141–arginine 160 are Cytoplasmic-facing. The helical transmembrane segment at alanine 161–valine 182 threads the bilayer. Residues methionine 183–lysine 213 lie on the Extracellular side of the membrane. A helical transmembrane segment spans residues isoleucine 214–tyrosine 235. The Cytoplasmic portion of the chain corresponds to phenylalanine 236–lysine 298. The chain crosses the membrane as a helical span at residues methionine 299–lysine 321. Over arginine 322–valine 336 the chain is Extracellular. A helical transmembrane segment spans residues tyrosine 337–phenylalanine 360. At leucine 361–proline 425 the chain is on the cytoplasmic side.

Belongs to the G-protein coupled receptor 1 family.

Its subcellular location is the cell membrane. Its function is as follows. Moderately selective excitatory receptor for orexin-A and, with a lower affinity, for orexin-B neuropeptide. Triggers an increase in cytoplasmic Ca(2+) levels in response to orexin-A binding. This is Orexin/Hypocretin receptor type 1 from Sus scrofa (Pig).